The primary structure comprises 1338 residues: Protein dispatched homolog 3 (1338 aa).

The Cytoplasmic segment spans residues 1 to 67 (MDTEDDPLLQ…VGWIFTNPYC (67 aa)). A helical membrane pass occupies residues 68–88 (AGFILFLGCAIPAVLAVVMFL). The Lumenal portion of the chain corresponds to 89–406 (HYPALDIDIS…YEVRRTFNND (318 aa)). The interval 164–196 (TRAKRSAPQGRTSSPEPRAHPHPGNETSRVTRG) is disordered. The SSD domain occupies 401–559 (RTFNNDMLLA…LFTMPAALGI (159 aa)). Residues 407-427 (MLLAFISSSCIAVLVYILTSC) form a helical membrane-spanning segment. Position 428 (Ser428) is a topological domain, cytoplasmic. A helical membrane pass occupies residues 429–449 (VFLSFFGIASIGLSCLVALFL). Over 450–452 (YHV) the chain is Lumenal. The helical transmembrane segment at 453 to 473 (VFGIQYLGILNGVAAFVIVGI) threads the bilayer. Topologically, residues 474 to 517 (GVDDVFVFINTYRQATHLKDLRLRMIHTIQTAGKATFFTSLTTA) are cytoplasmic. The chain crosses the membrane as a helical span at residues 518–538 (AAYAANIFSQIPAVHDFGLFM). Position 539 (Ser539) is a topological domain, lumenal. A helical transmembrane segment spans residues 540–560 (LIVSCCWVAVLFTMPAALGIW). The Cytoplasmic segment spans residues 561 to 672 (TLYVSPLESS…WVLWSAVKSR (112 aa)). Residues 673–693 (WVIVGLFLLVLLLSIFFASRL) traverse the membrane as a helical segment. Topologically, residues 694 to 1128 (RPASRAPVLF…IFMEIIGVQS (435 aa)) are lumenal. The tract at residues 747–768 (SLEKKKRGSASPWGSKGSISDT) is disordered. Residues 1129 to 1149 (ALYGLILSLVICVAAVAVFTT) traverse the membrane as a helical segment. His1150 is a topological domain (cytoplasmic). A helical transmembrane segment spans residues 1151 to 1171 (ILLLLPVLLSILGVVCLVVTI). Residues 1172 to 1237 (MYWSGWEMGA…TIEAIRHVGV (66 aa)) lie on the Lumenal side of the membrane. The chain crosses the membrane as a helical span at residues 1238–1258 (AIVSSAVTTVIATVPLFFCII). Residues 1259–1266 (APFAKFGK) lie on the Cytoplasmic side of the membrane. Residues 1267 to 1287 (IVALNTGVSILYTLTVSTALL) traverse the membrane as a helical segment. Residues 1288-1302 (SIMGPGTFTRSRTSC) are Lumenal-facing. The helical transmembrane segment at 1303 to 1323 (LKAVAGVLLAGLLGLCICLAL) threads the bilayer. The Cytoplasmic portion of the chain corresponds to 1324–1338 (LKGGFKIPLPNGTAL).

It belongs to the patched family. As to expression, expressed in retina, hippocampus and cerebellum. Expressed in the ganglion and bipolar cells of the inner and outer nuclear layers of the retina and in Purkinje cells (at protein level). Expressed strongly in brain and retina, weakly in testis and bone marrow.

It is found in the endoplasmic reticulum membrane. Its subcellular location is the nucleus membrane. The protein localises to the cytoplasmic vesicle membrane. Plays a role in neuronal proliferation and differentiation. Plays a role in the accumulation of cellular cholesterol. Involved in intracellular lipid droplet formation. May contribute to cholesterol homeostasis in neuronal cells. The sequence is that of Protein dispatched homolog 3 from Gallus gallus (Chicken).